The following is a 348-amino-acid chain: tRNA pseudouridine synthase D (348 aa).

Substrate is bound at residue phenylalanine 27. Aspartate 80 serves as the catalytic Nucleophile. Residue asparagine 129 coordinates substrate. In terms of domain architecture, TRUD spans 155-303 (GVPNYFGSQR…VESARRAVLL (149 aa)). Position 329 (phenylalanine 329) interacts with substrate.

This sequence belongs to the pseudouridine synthase TruD family.

It catalyses the reaction uridine(13) in tRNA = pseudouridine(13) in tRNA. Responsible for synthesis of pseudouridine from uracil-13 in transfer RNAs. In Pectobacterium carotovorum subsp. carotovorum (strain PC1), this protein is tRNA pseudouridine synthase D.